Consider the following 383-residue polypeptide: Acetylornithine deacetylase (383 aa).

H80 provides a ligand contact to Zn(2+). Residue D82 is part of the active site. D112 contacts Zn(2+). The active site involves E144. Residues E145, E169, and H355 each contribute to the Zn(2+) site.

The protein belongs to the peptidase M20A family. ArgE subfamily. In terms of assembly, homodimer. Requires Zn(2+) as cofactor. The cofactor is Co(2+). It depends on glutathione as a cofactor.

It is found in the cytoplasm. The enzyme catalyses N(2)-acetyl-L-ornithine + H2O = L-ornithine + acetate. The protein operates within amino-acid biosynthesis; L-arginine biosynthesis; L-ornithine from N(2)-acetyl-L-ornithine (linear): step 1/1. Functionally, catalyzes the hydrolysis of the amide bond of N(2)-acetylated L-amino acids. Cleaves the acetyl group from N-acetyl-L-ornithine to form L-ornithine, an intermediate in L-arginine biosynthesis pathway, and a branchpoint in the synthesis of polyamines. The sequence is that of Acetylornithine deacetylase from Escherichia coli O139:H28 (strain E24377A / ETEC).